Consider the following 1183-residue polypeptide: Polyphosphatidylinositol phosphatase INP52 (1183 aa).

Low complexity predominate over residues 133-153; sequence PPSISTHSSRSSLRSSSSRSL. The interval 133 to 161 is disordered; sequence PPSISTHSSRSSLRSSSSRSLNAQEQAPK. Phosphoserine is present on S152. An SAC domain is found at 167-507; sequence LRKLLSNGSF…GDQISQIYTG (341 aa). A Phosphoserine modification is found at S522. A compositionally biased stretch (low complexity) spans 955 to 968; it reads SPLLSGPSPQPSVV. The interval 955 to 1183 is disordered; sequence SPLLSGPSPQ…VHPLKPCDPN (229 aa). Phosphoserine is present on residues S1005 and S1016. A Phosphothreonine modification is found at T1032. 3 stretches are compositionally biased toward polar residues: residues 1046 to 1057, 1082 to 1100, and 1130 to 1145; these read KPVSLQKSSSEL, STAPDEISTSTKNSGVSTT, and KLNTSQEHSIKVSPSN. S1095 is modified (phosphoserine).

It belongs to the synaptojanin family. The protein in the central section; belongs to the inositol 1,4,5-trisphosphate 5-phosphatase family. Interacts (via SAC domain) with BSP1; the interaction is direct. Interacts with ABP1.

The protein resides in the cytoplasm. The protein localises to the cytoskeleton. Its subcellular location is the actin patch. It catalyses the reaction a 1,2-diacyl-sn-glycero-3-phospho-(1D-myo-inositol-4,5-bisphosphate) + H2O = a 1,2-diacyl-sn-glycero-3-phospho-(1D-myo-inositol 4-phosphate) + phosphate. In terms of biological role, dephosphorylates a number of phosphatidylinositols (PIs) like phosphatidylinositol 4,5-bisphosphate (PtdIns(4,5)P2), but also phosphatidylinositol 3-phosphate (PtdIns(3)P), phosphatidylinositol 4-phosphate (PtdIns(4)P), and phosphatidylinositol 3,5-bisphosphate (PtdIns(3,5)P2). Controls the cellular levels and subcellular distribution of phosphatidylinositol 3-phosphate and phosphatidylinositol 4,5-bisphosphate. Specifically functions within the early endocytic pathway and actin organization. In Saccharomyces cerevisiae (strain ATCC 204508 / S288c) (Baker's yeast), this protein is Polyphosphatidylinositol phosphatase INP52.